The following is a 262-amino-acid chain: NAD-dependent protein deacylase (262 aa).

The Deacetylase sirtuin-type domain occupies 1 to 262 (MSNLRRAAEA…AALSPPGVPT (262 aa)). Residue 22-42 (GAGISADSGIPTFRDKLTGLW) coordinates NAD(+). Substrate contacts are provided by Y67 and R70. 101–104 (QNID) is an NAD(+) binding site. Catalysis depends on H119, which acts as the Proton acceptor. Zn(2+)-binding residues include C127, C130, C155, and C158. NAD(+) contacts are provided by residues 195-197 (GTS), 221-223 (NLE), and A239.

It belongs to the sirtuin family. Class III subfamily. The cofactor is Zn(2+).

It localises to the cytoplasm. It catalyses the reaction N(6)-acetyl-L-lysyl-[protein] + NAD(+) + H2O = 2''-O-acetyl-ADP-D-ribose + nicotinamide + L-lysyl-[protein]. The catalysed reaction is N(6)-succinyl-L-lysyl-[protein] + NAD(+) + H2O = 2''-O-succinyl-ADP-D-ribose + nicotinamide + L-lysyl-[protein]. Its function is as follows. NAD-dependent lysine deacetylase and desuccinylase that specifically removes acetyl and succinyl groups on target proteins. Modulates the activities of several proteins which are inactive in their acylated form. This chain is NAD-dependent protein deacylase, found in Pseudomonas putida (strain ATCC 47054 / DSM 6125 / CFBP 8728 / NCIMB 11950 / KT2440).